A 140-amino-acid chain; its full sequence is Large ribosomal subunit protein uL11 (140 aa).

This sequence belongs to the universal ribosomal protein uL11 family. In terms of assembly, part of the ribosomal stalk of the 50S ribosomal subunit. Interacts with L10 and the large rRNA to form the base of the stalk. L10 forms an elongated spine to which L12 dimers bind in a sequential fashion forming a multimeric L10(L12)X complex. In terms of processing, one or more lysine residues are methylated.

Its function is as follows. Forms part of the ribosomal stalk which helps the ribosome interact with GTP-bound translation factors. The sequence is that of Large ribosomal subunit protein uL11 from Heliobacterium modesticaldum (strain ATCC 51547 / Ice1).